The chain runs to 185 residues: Ribosome-recycling factor (185 aa).

Belongs to the RRF family.

It localises to the cytoplasm. In terms of biological role, responsible for the release of ribosomes from messenger RNA at the termination of protein biosynthesis. May increase the efficiency of translation by recycling ribosomes from one round of translation to another. The chain is Ribosome-recycling factor from Clostridium kluyveri (strain NBRC 12016).